We begin with the raw amino-acid sequence, 200 residues long: MSEYELPPLPYDYDALEPHISEQVLTWHHDTHHQGYVNGWNDAEETLAENRETGDHASTAGALGDVTHNGSGHILHTLFWQSMSPAGGDEPSGALADRIAADFGSYENWRAEFEAAASAASGWALLVYDSHSNTLRNVAVDNHDEGALWGSHPILALDVWEHSYYYDYGPDRGSFVDAFFEVVDWDEPTERFEQAAERFE.

Positions 29, 76, 158, and 162 each coordinate Mn(2+).

The protein belongs to the iron/manganese superoxide dismutase family. As to quaternary structure, homodimer or homotetramer. It depends on Mn(2+) as a cofactor.

The enzyme catalyses 2 superoxide + 2 H(+) = H2O2 + O2. Inhibited by hydrogen peroxide. Is resistant to cyanide and azide inhibition. Its function is as follows. Destroys superoxide anion radicals which are normally produced within the cells and which are toxic to biological systems. This is Superoxide dismutase [Mn] 1 (sod1) from Halobacterium salinarum (strain ATCC 700922 / JCM 11081 / NRC-1) (Halobacterium halobium).